A 20-amino-acid polypeptide reads, in one-letter code: DnaJ homolog subfamily C member 1 (20 aa).

Residues 1 to 20 lie on the Lumenal side of the membrane; it reads WESGDLELFDLVEEVXLNFY. Residues 18 to 20 enclose the J domain; it reads NFY.

Interacts (via SANT 2 domain) with SERPINA3; the interaction delays the formation of the covalent inhibitory complex SERPINA3-chymotrypsin, but does not alter the catalytic activity of SERPINA3. Interacts (via SANT 2 domain) with ITIH4 (via C-terminus); the interaction protects ITIH4 against in vitro cleavage by kallikrein. Interacts (via J domain) with HSPA5. Interacts (via cytosolic domain) with ribosomes.

It is found in the endoplasmic reticulum membrane. Its subcellular location is the nucleus membrane. It localises to the microsome membrane. The protein is DnaJ homolog subfamily C member 1 (DNAJC1) of Canis lupus familiaris (Dog).